We begin with the raw amino-acid sequence, 42 residues long: Histone H1B (42 aa).

An H15 domain is found at 1–42 (TYYELIKAAILALKERNGSSAQAIKKYILENNKIEFQQTFLR).

This sequence belongs to the histone H1/H5 family.

It is found in the nucleus. Its subcellular location is the chromosome. Functionally, histones H1 are necessary for the condensation of nucleosome chains into higher-order structures. This chain is Histone H1B, found in Olisthodiscus luteus (Marine phytoflagellate).